Here is a 172-residue protein sequence, read N- to C-terminus: IFFYEERNFQGRCYECSSECSDLSSYFNRCNSIRVESGNWILYEQPSYRGHQYYLWKGEYPDFQRWMGFNDYIKSCRFIPHPHSQYKMRIYERGDFQGQMMEFFDDCPNTYDRFRFRDIHSCNVSDGHWMFYEEPNYKGRQYYLRPGEYRRFSDWGASSARIGSFRRVHHMV.

2 Beta/gamma crystallin 'Greek key' domains span residues 1–37 (IFFY…RVES) and 38–80 (GNWI…RFIP). Residues 81–85 (HPHSQ) form a connecting peptide region. 2 Beta/gamma crystallin 'Greek key' domains span residues 86 to 126 (YKMR…NVSD) and 127 to 169 (GHWM…RRVH).

It belongs to the beta/gamma-crystallin family. Monomer.

Functionally, crystallins are the dominant structural components of the vertebrate eye lens. The chain is Gamma-crystallin-4 (cryg4) from Xenopus laevis (African clawed frog).